A 1941-amino-acid polypeptide reads, in one-letter code: WD repeat-containing protein 81 (1941 aa).

The disordered stretch occupies residues 1-27 (MAQGSGGREGALRTPAGGWHSPPSPDM). The tract at residues 1–650 (MAQGSGGREG…TPCEASWTRD (650 aa)) is necessary and sufficient for the interaction with SQSTM1. One can recognise a BEACH domain in the interval 337–614 (GQPTGQEELR…IPKLLVQTIQ (278 aa)). Disordered regions lie at residues 618-637 (GREDFTENPGQLPNGVGRPV), 694-718 (VASASRPGRRNKAAGADPGEGEEGR), 1022-1074 (SKDL…VSFH), 1097-1217 (PQEA…EGKE), 1523-1556 (PSSRNPASVEPTMPGTGPEWDPHGGGCPQDDGHS), and 1569-1602 (QIPNDSRPENPGPLGPISGVGGGGLGSGSDDNAL). Residues 1137–1146 (LRSGDSSQDL) are compositionally biased toward polar residues. Residues 1151 to 1174 (GSEEEEEEEDSCVVLEEEEGEQEE) are compositionally biased toward acidic residues. Over residues 1586–1595 (SGVGGGGLGS) the composition is skewed to gly residues. 7 WD repeats span residues 1639–1677 (IRLQSFPGHSGAVKCVAPLSSEDFFLSGSKDRTVRLWPL), 1686–1724 (ETAPRLVYTQHRKSVFFVGQLEAPQHVVSCDGAVHVWDP), 1729–1769 (TLRT…FVDC), 1777–1815 (EFRLGGGLNPGLVRALAISPSGRSVVAGFSSGFMVLLDT), 1819–1856 (LVLRGWPAHEGDILQIKAVEGSVLVSSSSDHSLTVWKE), 1860–1896 (KPTHHYKSASDPIHTFDLYGSEVVTGTVSNKIGVCSL), and 1902–1941 (QATTKLSSENFRGTLTSLALLPTKRHLLLGSDNGVIRLLA).

Belongs to the WD repeat WDR81 family. Interacts with WDR91; involved in early to late endosome cargo transport. Interacts with BECN1; negatively regulates the PI3 kinase/PI3K activity associated with endosomal membranes. Interacts with SQSTM1; the interaction is direct and regulates the interaction of SQSTM1 with ubiquitinated proteins. Interacts with MAP1LC3C; recruits MAP1LC3C to ubiquitinated protein aggregates in the aggrephagy process. In terms of tissue distribution, widely expressed. In the brain, highest levels in cerebellum and corpus callosum.

The protein localises to the early endosome membrane. The protein resides in the late endosome membrane. It is found in the lysosome membrane. Its subcellular location is the cytoplasmic vesicle. It localises to the autophagosome membrane. The protein localises to the mitochondrion. The protein resides in the cytoplasm. It is found in the cytosol. In terms of biological role, functions as a negative regulator of the PI3 kinase/PI3K activity associated with endosomal membranes via BECN1, a core subunit of the PI3K complex. By modifying the phosphatidylinositol 3-phosphate/PtdInsP3 content of endosomal membranes may regulate endosome fusion, recycling, sorting and early to late endosome transport. It is for instance, required for the delivery of cargos like BST2/tetherin from early to late endosome and thereby participates indirectly to their degradation by the lysosome. May also play a role in aggrephagy, the macroautophagic degradation of ubiquitinated protein aggregates. In this process, may regulate the interaction of SQSTM1 with ubiquitinated proteins and also recruit MAP1LC3C. May also be involved in maintenance of normal mitochondrial structure and organization. The chain is WD repeat-containing protein 81 from Homo sapiens (Human).